A 470-amino-acid polypeptide reads, in one-letter code: Leucine-rich repeat extensin-like protein 6 (470 aa).

The N-terminal stretch at 1–28 (MREDTFFFQWWFLVSGLSFIFLLPQAFT) is a signal peptide. Asparagine 83 carries an N-linked (GlcNAc...) asparagine glycan. LRR repeat units follow at residues 98–122 (VLTVAGIDLNHANIAGYLPLELGLL), 123–146 (TDLALFHINSNRFQGQLPKTLKCL), 147–170 (HLLHELDVSNNKLSGEFPSVIFSL), 171–194 (PSLKFLDIRFNEFQGDVPSQLFDL), 196–217 (LDALFINDNKFQFRLPRNIGNS), 219–241 (VSVLVLANNDLQGSCVPPSFYKM), 243–265 (KTLHEIIITNSQLTGCLNREIGL), 266–290 (LNQLTVFDVSYNNLVGSLPETIGDM), 291–314 (KSLEQLNIAHNKFSGYIPESICRL), and 316–337 (RLENFTYSYNFFSGEPPACLRL). Asparagine 319 carries an N-linked (GlcNAc...) asparagine glycan. The disordered stretch occupies residues 378–411 (SPPPPPPPPPPPPPPPPPPPPPPPPPPPPPYVYP). A contains the Ser-Pro(4) repeats region spans residues 378-470 (SPPPPPPPPP…CNDLPTPVHY (93 aa)).

In terms of processing, hydroxylated on proline residues in the S-P-P-P-P repeat. Post-translationally, O-glycosylated on hydroxyprolines. As to expression, expressed in roots.

It localises to the secreted. It is found in the cell wall. Modulates cell morphogenesis by regulating cell wall formation and assembly, and/or growth polarization. The sequence is that of Leucine-rich repeat extensin-like protein 6 (LRX6) from Arabidopsis thaliana (Mouse-ear cress).